Reading from the N-terminus, the 402-residue chain is Prostaglandin E2 receptor EP1 subtype (402 aa).

Residues 1–35 (MSPCGPLNLSLAGEATTCAAPWVPNTSAVPPSGAS) are Extracellular-facing. N8 and N25 each carry an N-linked (GlcNAc...) asparagine glycan. A helical membrane pass occupies residues 36 to 62 (PALPIFSMTLGAVSNLLALALLAQAAG). Over 63 to 72 (RLRRRRSAAT) the chain is Cytoplasmic. The chain crosses the membrane as a helical span at residues 73–96 (FLLFVASLLATDLAGHVIPGALVL). The Extracellular portion of the chain corresponds to 97–111 (RLYTAGRAPAGGACH). A disulfide bridge connects residues C110 and C188. The helical transmembrane segment at 112–133 (FLGGCMVFFGLCPLLLGCGMAV) threads the bilayer. At 134–155 (ERCVGVTRPLLHAARVSVARAR) the chain is on the cytoplasmic side. Residues 156–177 (LALAAVAAVALAVALLPLARVG) form a helical membrane-spanning segment. The Extracellular segment spans residues 178 to 201 (RYELQYPGTWCFIGLGPPGGWRQA). Residues 202 to 227 (LLAGLFASLGLVALLAALVCNTLSGL) form a helical membrane-spanning segment. Residues 228–294 (ALLRARWRRR…ARRARAHDVE (67 aa)) lie on the Cytoplasmic side of the membrane. Residues 238–266 (SRRPPPASGPDSRRRWGAHGPRSASASSA) form a disordered region. A helical transmembrane segment spans residues 295–321 (MVGQLVGIMVVSCICWSPMLVLVALAV). The Extracellular segment spans residues 322 to 332 (GGWSSTSLQRP). The chain crosses the membrane as a helical span at residues 333–354 (LFLAVRLASWNQILDPWVYILL). The Cytoplasmic portion of the chain corresponds to 355-402 (RQAVLRQLLRLLPPRAGAKGGPAGLGLTPSAWEASSLRSSRHSGLSHF).

The protein belongs to the G-protein coupled receptor 1 family. In terms of processing, phosphorylated. As to expression, abundant in kidney. Lower level expression in lung, skeletal muscle and spleen, lowest expression in testis and not detected in liver brain and heart.

The protein resides in the cell membrane. Receptor for prostaglandin E2 (PGE2). The activity of this receptor is mediated by G(q) proteins which activate a phosphatidylinositol-calcium second messenger system. May play a role as an important modulator of renal function. Implicated the smooth muscle contractile response to PGE2 in various tissues. This Homo sapiens (Human) protein is Prostaglandin E2 receptor EP1 subtype (PTGER1).